The following is a 91-amino-acid chain: Mercuric transport protein periplasmic component (91 aa).

An N-terminal signal peptide occupies residues 1–19 (MKKLFASLAIAAVVAPVWA). Residues 22 to 88 (QTVTLSVPGM…ATEDAGYPSS (67 aa)) enclose the HMA domain. Positions 33 and 36 each coordinate Hg(2+).

It belongs to the MerP family. In terms of assembly, monomer.

It localises to the periplasm. Involved in mercury resistance. Acts as a mercury scavenger that specifically binds to a mercuric ion in the periplasm and probably passes it to the cytoplasmic mercuric reductase MerA via the mercuric transport protein MerT. The sequence is that of Mercuric transport protein periplasmic component from Serratia marcescens.